The chain runs to 62 residues: Pro-MCH variant (62 aa).

The NGE-like stretch occupies residues 23–41 (GSVAFPAENGVQDTESTQE). The tract at residues 28–62 (PAENGVQDTESTQEKRETGDEENSAQFPIGRRDFD) is disordered. The segment at 44 to 56 (ETGDEENSAQFPI) is NEI-like. The segment at 60–62 (DFD) is melanin-concentrating hormone-like.

It belongs to the melanin-concentrating hormone family.

The sequence is that of Pro-MCH variant (PMCHL1) from Hylobates lar (Lar gibbon).